Reading from the N-terminus, the 250-residue chain is Orotidine 5'-phosphate decarboxylase (250 aa).

Substrate is bound by residues Asp9, Lys40, 67–76 (DLKFHDIPNT), Thr132, Arg190, Gln204, Gly224, and Arg225. The active-site Proton donor is Lys69.

It belongs to the OMP decarboxylase family. Type 1 subfamily. Homodimer.

It catalyses the reaction orotidine 5'-phosphate + H(+) = UMP + CO2. The protein operates within pyrimidine metabolism; UMP biosynthesis via de novo pathway; UMP from orotate: step 2/2. Catalyzes the decarboxylation of orotidine 5'-monophosphate (OMP) to uridine 5'-monophosphate (UMP). This chain is Orotidine 5'-phosphate decarboxylase, found in Nitratidesulfovibrio vulgaris (strain DSM 19637 / Miyazaki F) (Desulfovibrio vulgaris).